A 95-amino-acid chain; its full sequence is FXYD domain-containing ion transport regulator 6 (95 aa).

The N-terminal stretch at 1 to 18 (MELVLVFLCSLLAPTVLA) is a signal peptide. The Extracellular portion of the chain corresponds to 19–35 (SAAEKEKEMDPFHYDYQ). The helical transmembrane segment at 36-58 (TLRIGGLVFAVVLFSVGILLILS) threads the bilayer. The Cytoplasmic segment spans residues 59-95 (RRCKCSFNQKPRAPGDEEAQVENLITANATEPQKAEN).

Belongs to the FXYD family. In terms of assembly, regulatory subunit of the sodium/potassium-transporting ATPase which is composed of a catalytic alpha subunit, a non-catalytic beta subunit and an additional regulatory subunit. The regulatory subunit, a member of the FXYD protein family, modulates the enzymatic activity in a tissue- and isoform-specific way by changing affinities of the Na+/K+-ATPase toward Na(+), K(+) or ATP.

It is found in the cell membrane. Functionally, associates with and regulates the activity of the sodium/potassium-transporting ATPase (NKA) which catalyzes the hydrolysis of ATP coupled with the exchange of Na(+) and K(+) ions across the plasma membrane. Reduces the apparent affinity for intracellular Na(+) with no change in the apparent affinity for extracellular K(+). In addition to modulating NKA kinetics, may also function as a regulator of NKA localization to the plasma membrane. This is FXYD domain-containing ion transport regulator 6 (FXYD6) from Pongo abelii (Sumatran orangutan).